Reading from the N-terminus, the 842-residue chain is MVAFTVDQMRSLMDKVTNVRNMSVIAHVDHGKSTLTDSLVQKAGIISAAKAGEARFMDTRKDEQERGITIKSTAISLYSDLPEEDVKEIPQKSDGNSFLINLIDSPGHVDFSSEVTAALRVTDGALVVVDTVEGVCVQTETVLRQALGERIKPVVCINKVDRALLELQVSKEDLYQSFSRTVESVNVIISTYSDEVLGDVQVYPSKGTVAFGSGLHGWAFTIRQFATRYAKKFGVDKQKMMERLWGDSFFNPKTKKWTNKETDTDGKPLERAFNMFVLDPIFRLFAAIMNFKKDEIPTLLEKLEINLKSDEKDLEGKALLKVVMRKFLPAADALLEMIVMHLPSPVTAQNYRAEQLYEGPADDANCIAIKKCDPTADLMLYVSKMVPTSDKGRFYAFGRVFAGTVKSGQKIRIQGPNYVPGKKDDLFLKAVQRVVLMMGSRVEPIDDCPAGNIVGLVGIDQFLLKTGTLTTSETAYNMKVMKFSVSPVVQVAVDVKNANDLPKLVEGLKRLSKSDPCVLTQMSESGEHIVAGTGELHLEICLQDLENEHAGIPLKISPPVVAYRETVEAESSQVALSKSPNKHNRIYLKAEPMDEEVSLAIEQGKINPRDDFKARARVMADEYGWDVTDARKIWCFGPDGNGPNLVVDQTKAVQYLNEIKDSVVSAFQWATKEGPILGETMRSVRVNILDVTLHADAIHRGAGQIMPTMRRATYAGFLLAEPKIQEPVFLVEIQCPEQAVGGIYSVLNKKRGQVVSEEQRPGTPLFTVKAYLPVNESFGFTGELRQATGGQAFPQMVFDHWATLNSDPLDPTSKAGEIVTAARKRHGMKEEVPGWQEYYDKL.

The tr-type G domain occupies 17–346; the sequence is TNVRNMSVIA…MIVMHLPSPV (330 aa). Residues 26–33, 158–161, and 213–215 each bind GTP; these read AHVDHGKS, NKVD, and SGL. His-699 is subject to Diphthamide.

It belongs to the TRAFAC class translation factor GTPase superfamily. Classic translation factor GTPase family. EF-G/EF-2 subfamily.

It localises to the cytoplasm. It catalyses the reaction GTP + H2O = GDP + phosphate + H(+). Functionally, catalyzes the GTP-dependent ribosomal translocation step during translation elongation. During this step, the ribosome changes from the pre-translocational (PRE) to the post-translocational (POST) state as the newly formed A-site-bound peptidyl-tRNA and P-site-bound deacylated tRNA move to the P and E sites, respectively. Catalyzes the coordinated movement of the two tRNA molecules, the mRNA and conformational changes in the ribosome. This Candida glabrata (strain ATCC 2001 / BCRC 20586 / JCM 3761 / NBRC 0622 / NRRL Y-65 / CBS 138) (Yeast) protein is Elongation factor 2 (EFT1).